Reading from the N-terminus, the 98-residue chain is Integration host factor subunit alpha (98 aa).

The tract at residues 54–74 is disordered; the sequence is LRDKASRPGRNPKTGENIPVS.

It belongs to the bacterial histone-like protein family. In terms of assembly, heterodimer of an alpha and a beta chain.

This protein is one of the two subunits of integration host factor, a specific DNA-binding protein that functions in genetic recombination as well as in transcriptional and translational control. The chain is Integration host factor subunit alpha from Actinobacillus succinogenes (strain ATCC 55618 / DSM 22257 / CCUG 43843 / 130Z).